The primary structure comprises 324 residues: MPKSERKILLDFEKPLAELENRINQIRELAKDCSSVDVSEQIYQLEAKATQLRQEIFSSLSPVQKLQLARHPRRPTSLDYIQAISDEWIELHGDRGGSDDPAIVGGLARVNGRPVVIIGHQKGRDTKDNVARNFGMASAGGYRKSIRFMEHGNRFGMPILTFIDTPGAWPGIEAERLGQGEAIAYNLREMFHLDVPIICTVIGEGGSGGALGVGVGDRLLMLEHSIYTVASPEACAAILWKDASKASQAAEALKITSWDLKKIGIIDDVVPEPSGGAHANPLQAAENLKTAIVKSLDDLNHLSSPQRRKKRYQKFRSMGVFLET.

The CoA carboxyltransferase C-terminal domain occupies 44 to 298 (QLEAKATQLR…KTAIVKSLDD (255 aa)).

The protein belongs to the AccA family. As to quaternary structure, acetyl-CoA carboxylase is a heterohexamer composed of biotin carboxyl carrier protein (AccB), biotin carboxylase (AccC) and two subunits each of ACCase subunit alpha (AccA) and ACCase subunit beta (AccD).

The protein localises to the cytoplasm. It catalyses the reaction N(6)-carboxybiotinyl-L-lysyl-[protein] + acetyl-CoA = N(6)-biotinyl-L-lysyl-[protein] + malonyl-CoA. It participates in lipid metabolism; malonyl-CoA biosynthesis; malonyl-CoA from acetyl-CoA: step 1/1. Functionally, component of the acetyl coenzyme A carboxylase (ACC) complex. First, biotin carboxylase catalyzes the carboxylation of biotin on its carrier protein (BCCP) and then the CO(2) group is transferred by the carboxyltransferase to acetyl-CoA to form malonyl-CoA. In Trichodesmium erythraeum (strain IMS101), this protein is Acetyl-coenzyme A carboxylase carboxyl transferase subunit alpha.